The sequence spans 416 residues: Vacuole membrane protein KMS2 (416 aa).

Gly-2 bears the N-acetylglycine mark. Topologically, residues 2 to 59 are cytoplasmic; sequence GYGNRASSKTPAISGLREKHQQDLEKLTLTSQPFKTLRLFVVAVFLYVRRWSSYLLAN. A helical transmembrane segment spans residues 60–80; sequence VGWLILFCSIFVAFAALLVTL. Residues 81–100 lie on the Lumenal side of the membrane; the sequence is DGPHVKHVEELSEYTRFGLW. Residues 101 to 123 form a helical membrane-spanning segment; sequence WIFLGVASSIGLGSGLHTFVLYL. Residues 124–249 lie on the Cytoplasmic side of the membrane; the sequence is GPHIALFTIK…WLLSHSQYLN (126 aa). Residues 250 to 270 traverse the membrane as a helical segment; it reads FFTILILASVPNPLFDLAGIM. Over 271 to 281 the chain is Lumenal; sequence CGQFEKPFWEF. A helical transmembrane segment spans residues 282–304; that stretch reads FLATLIGKAIIKTHIQTVFIICV. Residues 305–315 lie on the Cytoplasmic side of the membrane; it reads CNNQLLDWVEN. A helical membrane pass occupies residues 316–336; it reads ELIYILSFVPGFASALPELTA. The Lumenal portion of the chain corresponds to 337–364; it reads KLRLMKEKYLIASPPVSSDINVKKWDLS. The chain crosses the membrane as a helical span at residues 365–385; the sequence is FASVWNGVVWLMLLNFFGQIV. The Cytoplasmic portion of the chain corresponds to 386-416; sequence TSTAQRYLKKQQEEELDALTNKSSLTSKKSK.

This sequence belongs to the VMP1 family.

Its subcellular location is the endoplasmic reticulum membrane. Its function is as follows. Involved in the early secretory pathway. Required for the correct export of secretory products from the endoplasmic reticulum (ER) and involved in the maintenance of ER integrity. This chain is Vacuole membrane protein KMS2, found in Arabidopsis thaliana (Mouse-ear cress).